The following is a 387-amino-acid chain: Pyrophosphate--fructose 6-phosphate 1-phosphotransferase 3 (387 aa).

Gly15 is a diphosphate binding site. Asp114 is a Mg(2+) binding site. Residues 140 to 142, 186 to 188, Glu247, and 308 to 311 each bind substrate; these read TID, MGR, and YELR. Residue Asp142 is the Proton acceptor of the active site.

This sequence belongs to the phosphofructokinase type A (PFKA) family. PPi-dependent PFK group II subfamily. Clade 'Short' sub-subfamily. In terms of assembly, homotetramer. Mg(2+) serves as cofactor.

The protein localises to the cytoplasm. The enzyme catalyses beta-D-fructose 6-phosphate + diphosphate = beta-D-fructose 1,6-bisphosphate + phosphate + H(+). Its pathway is carbohydrate degradation; glycolysis; D-glyceraldehyde 3-phosphate and glycerone phosphate from D-glucose: step 3/4. With respect to regulation, non-allosteric. Catalyzes the phosphorylation of D-fructose 6-phosphate, the first committing step of glycolysis. Uses inorganic phosphate (PPi) as phosphoryl donor instead of ATP like common ATP-dependent phosphofructokinases (ATP-PFKs), which renders the reaction reversible, and can thus function both in glycolysis and gluconeogenesis. Consistently, PPi-PFK can replace the enzymes of both the forward (ATP-PFK) and reverse (fructose-bisphosphatase (FBPase)) reactions. The chain is Pyrophosphate--fructose 6-phosphate 1-phosphotransferase 3 (pfk3) from Trichomonas vaginalis (strain ATCC PRA-98 / G3).